The chain runs to 363 residues: UDP-3-O-acylglucosamine N-acyltransferase (363 aa).

His266 (proton acceptor) is an active-site residue.

Belongs to the transferase hexapeptide repeat family. LpxD subfamily. As to quaternary structure, homotrimer.

It catalyses the reaction a UDP-3-O-[(3R)-3-hydroxyacyl]-alpha-D-glucosamine + a (3R)-hydroxyacyl-[ACP] = a UDP-2-N,3-O-bis[(3R)-3-hydroxyacyl]-alpha-D-glucosamine + holo-[ACP] + H(+). It functions in the pathway bacterial outer membrane biogenesis; LPS lipid A biosynthesis. Catalyzes the N-acylation of UDP-3-O-acylglucosamine using 3-hydroxyacyl-ACP as the acyl donor. Is involved in the biosynthesis of lipid A, a phosphorylated glycolipid that anchors the lipopolysaccharide to the outer membrane of the cell. The protein is UDP-3-O-acylglucosamine N-acyltransferase of Bordetella bronchiseptica (strain ATCC BAA-588 / NCTC 13252 / RB50) (Alcaligenes bronchisepticus).